A 499-amino-acid polypeptide reads, in one-letter code: Phenylalanine--tRNA ligase alpha subunit (499 aa).

Residues threonine 330, 372–374 (QVE), and tyrosine 412 contribute to the L-phenylalanine site. Position 414 (glutamate 414) interacts with Mg(2+). Phenylalanine 438 is an L-phenylalanine binding site.

It belongs to the class-II aminoacyl-tRNA synthetase family. Phe-tRNA synthetase alpha subunit type 2 subfamily. Tetramer of two alpha and two beta subunits. It depends on Mg(2+) as a cofactor.

The protein localises to the cytoplasm. It carries out the reaction tRNA(Phe) + L-phenylalanine + ATP = L-phenylalanyl-tRNA(Phe) + AMP + diphosphate + H(+). The chain is Phenylalanine--tRNA ligase alpha subunit (frs2) from Schizosaccharomyces pombe (strain 972 / ATCC 24843) (Fission yeast).